Here is a 598-residue protein sequence, read N- to C-terminus: DNA polymerase alpha subunit B (598 aa).

Residues 112 to 140 are compositionally biased toward polar residues; that stretch reads SYTTPSKGSQKRAISTPETPLTKRSVSTR. The interval 112 to 167 is disordered; sequence SYTTPSKGSQKRAISTPETPLTKRSVSTRSPHQLLSPSSFSPSATPSQKYNSRSNR. Ser126 bears the Phosphoserine mark. Phosphothreonine is present on residues Thr127 and Thr130. Residues Ser141, Ser147, Ser152, and Ser154 each carry the phosphoserine modification. A compositionally biased stretch (low complexity) spans 141–158; sequence SPHQLLSPSSFSPSATPS.

This sequence belongs to the DNA polymerase alpha subunit B family. In terms of assembly, component of the alpha DNA polymerase complex (also known as the alpha DNA polymerase-primase complex) consisting of four subunits: the catalytic subunit POLA1, the regulatory subunit POLA2, and primase complex subunits PRIM1 and PRIM2 respectively. Within the complex, POLA1 directly interacts with PRIM2/p58. Post-translationally, phosphorylated in a cell cycle-dependent manner, in G2/M phase.

It localises to the nucleus. Functionally, accessory subunit of the DNA polymerase alpha complex (also known as the alpha DNA polymerase-primase complex) which plays an essential role in the initiation of DNA synthesis. During the S phase of the cell cycle, the DNA polymerase alpha complex (composed of a catalytic subunit POLA1, an accessory subunit POLA2 and two primase subunits, the catalytic subunit PRIM1 and the regulatory subunit PRIM2) is recruited to DNA at the replicative forks via direct interactions with MCM10 and WDHD1. The primase subunit of the polymerase alpha complex initiates DNA synthesis by oligomerising short RNA primers on both leading and lagging strands. These primers are initially extended by the polymerase alpha catalytic subunit and subsequently transferred to polymerase delta and polymerase epsilon for processive synthesis on the lagging and leading strand, respectively. The protein is DNA polymerase alpha subunit B (POLA2) of Homo sapiens (Human).